A 124-amino-acid polypeptide reads, in one-letter code: Small ribosomal subunit protein uS12 (124 aa).

A 3-methylthioaspartic acid modification is found at Asp89.

This sequence belongs to the universal ribosomal protein uS12 family. In terms of assembly, part of the 30S ribosomal subunit. Contacts proteins S8 and S17. May interact with IF1 in the 30S initiation complex.

In terms of biological role, with S4 and S5 plays an important role in translational accuracy. Functionally, interacts with and stabilizes bases of the 16S rRNA that are involved in tRNA selection in the A site and with the mRNA backbone. Located at the interface of the 30S and 50S subunits, it traverses the body of the 30S subunit contacting proteins on the other side and probably holding the rRNA structure together. The combined cluster of proteins S8, S12 and S17 appears to hold together the shoulder and platform of the 30S subunit. In Nitratiruptor sp. (strain SB155-2), this protein is Small ribosomal subunit protein uS12.